The following is a 156-amino-acid chain: MKLFILAVGHKMPGWIASGFDEYTKRMPPELRIELREIKPELRSGGRSAESVMAAERQKIEAALPKGARLVALDERGRDWTTMQLAQALPGWQQDGRDVAFVIGGADGLDPELKARADTLLRISSMTLPHGMVRVLLAEQLYRAWSITQNHPYHRA.

S-adenosyl-L-methionine is bound by residues L73, G104, and 123–128 (ISSMTL).

This sequence belongs to the RNA methyltransferase RlmH family. Homodimer.

The protein resides in the cytoplasm. The catalysed reaction is pseudouridine(1915) in 23S rRNA + S-adenosyl-L-methionine = N(3)-methylpseudouridine(1915) in 23S rRNA + S-adenosyl-L-homocysteine + H(+). Functionally, specifically methylates the pseudouridine at position 1915 (m3Psi1915) in 23S rRNA. The polypeptide is Ribosomal RNA large subunit methyltransferase H (Burkholderia lata (strain ATCC 17760 / DSM 23089 / LMG 22485 / NCIMB 9086 / R18194 / 383)).